The sequence spans 268 residues: Undecaprenyl-diphosphatase (268 aa).

7 consecutive transmembrane segments (helical) span residues 43 to 63 (FWKTFAVLIQLGAILAILAIY), 85 to 105 (IGVLVAFLPAVILGLIFGTFI), 108 to 128 (VLFNPWVVCFSLIAGGAVLLW), 141 to 161 (AMAFPLPMYLGIGIAQCAAMV), 184 to 204 (AAEFSFFLAIPTMLGAFVYDV), 217 to 237 (FIIIVGFVVSFITAIVVVKTF), and 246 to 266 (FTFFAWWRVIVGTLGLIALAL).

It belongs to the UppP family.

It is found in the cell inner membrane. The catalysed reaction is di-trans,octa-cis-undecaprenyl diphosphate + H2O = di-trans,octa-cis-undecaprenyl phosphate + phosphate + H(+). Its function is as follows. Catalyzes the dephosphorylation of undecaprenyl diphosphate (UPP). Confers resistance to bacitracin. The sequence is that of Undecaprenyl-diphosphatase from Afipia carboxidovorans (strain ATCC 49405 / DSM 1227 / KCTC 32145 / OM5) (Oligotropha carboxidovorans).